Reading from the N-terminus, the 251-residue chain is Tryptophan synthase alpha chain (251 aa).

Residues E46 and D57 each act as proton acceptor in the active site.

Belongs to the TrpA family. Tetramer of two alpha and two beta chains.

The catalysed reaction is (1S,2R)-1-C-(indol-3-yl)glycerol 3-phosphate + L-serine = D-glyceraldehyde 3-phosphate + L-tryptophan + H2O. It participates in amino-acid biosynthesis; L-tryptophan biosynthesis; L-tryptophan from chorismate: step 5/5. Its function is as follows. The alpha subunit is responsible for the aldol cleavage of indoleglycerol phosphate to indole and glyceraldehyde 3-phosphate. The sequence is that of Tryptophan synthase alpha chain from Karelsulcia muelleri (strain GWSS) (Sulcia muelleri).